The chain runs to 60 residues: Arabinogalactan protein 12 (60 aa).

The N-terminal stretch at 1–27 (MESMKMKLIVVLMVAIVAFSAVGNVAA) is a signal peptide. Gln-28 is subject to Pyrrolidone carboxylic acid. 3 positions are modified to 4-hydroxyproline: Pro-32, Pro-34, and Pro-36. Residues Pro-32, Pro-34, and Pro-36 are each glycosylated (O-linked (Ara...) hydroxyproline). A lipid anchor (GPI-anchor amidated serine) is attached at Ser-38. The propeptide at 39–60 (DAAMFVPALFASVAALASGFLF) is removed in mature form.

The protein belongs to the AG-peptide AGP family. In terms of processing, contains 4-hydroxyproline; hydroxylated on Pro-32, Pro-34 and Pro-36. Post-translationally, O-glycosylated on hydroxyprolines; noncontiguous hydroxylproline residues are glycosylated with arabinogalactan. In terms of tissue distribution, expressed in reproductive tissues. Expressed in chalaza, funiculus, stigma, septum, style and transmitting tract.

Its subcellular location is the cell membrane. Proteoglycan that seems to be implicated in diverse developmental roles such as differentiation, cell-cell recognition, embryogenesis and programmed cell death. This Arabidopsis thaliana (Mouse-ear cress) protein is Arabinogalactan protein 12.